Consider the following 256-residue polypeptide: uncharacterized protein (256 aa).

2 helical membrane passes run 155–175 and 203–223; these read ITGM…GLWL and ITTT…YLLI.

It is found in the cell membrane. This is an uncharacterized protein from Mycobacterium bovis (strain ATCC BAA-935 / AF2122/97).